The following is an 800-amino-acid chain: Phosphoinositide 3-kinase adapter protein 1 (800 aa).

The TIR domain occupies 8–145; it reads GGYDVLILYA…AVKKAISEDS (138 aa). The segment at 10–144 is necessary and sufficient to mediate inhibition of NF-kappa-B downstream of activated TLRs; sequence YDVLILYASD…EAVKKAISED (135 aa). The region spanning 185-321 is the DBB domain; that stretch reads VQPDHIRCGV…NIPASGLHLF (137 aa). Tyrosine 266 carries the post-translational modification Phosphotyrosine. Residues tyrosine 423, tyrosine 448, and tyrosine 463 each carry the phosphotyrosine; by SYK modification. The segment at 527 to 548 is disordered; it reads EMASRPPVPVPRPESSSPQPDN. Residues 643-663 adopt a coiled-coil conformation; the sequence is QQENLKRLRDSITRRQMEKQK. The segment covering 702-713 has biased composition (basic and acidic residues); the sequence is PKKELKRGDWKT. Residues 702 to 800 are disordered; that stretch reads PKKELKRGDW…YPPPVPPRGR (99 aa). Over residues 714–737 the composition is skewed to low complexity; it reads ESTSSTTSSASNRSSTRSILSVSS. Over residues 749–759 the composition is skewed to polar residues; the sequence is SEASRSRSPIP. Pro residues-rich tracts occupy residues 767–777 and 791–800; these read LPLPERPPRVP and YPPPVPPRGR.

Homooligomer. Interacts (phosphorylated on tyrosine residues within YXXM motifs) with PIK3R1 (via SH2 domain); required for BCR- and TLR-mediated activation of phosphoinositide 3-kinase. Constitutively phosphorylated. Phosphorylated on tyrosine residues within the YXXM motifs by BTK and SYK. Isoform 1 and isoform 2 are phosphorylated on tyrosine residues, most likely within the YXXM motifs, via CD19 activation.

The protein localises to the cytoplasm. It is found in the cell membrane. In terms of biological role, signaling adapter that contributes to B-cell development by linking B-cell receptor (BCR) signaling to the phosphoinositide 3-kinase (PI3K)-Akt signaling pathway. Has a complementary role to the BCR coreceptor CD19, coupling BCR and PI3K activation by providing a docking site for the PI3K subunit PIK3R1. Alternatively, links Toll-like receptor (TLR) signaling to PI3K activation, a process preventing excessive inflammatory cytokine production. Also involved in the activation of PI3K in natural killer cells. May be involved in the survival of mature B-cells via activation of REL. The sequence is that of Phosphoinositide 3-kinase adapter protein 1 (PIK3AP1) from Gallus gallus (Chicken).